The following is a 379-amino-acid chain: Homoserine O-succinyltransferase (379 aa).

The 310-residue stretch at 48-357 folds into the AB hydrolase-1 domain; the sequence is NAVLICHALS…SAHGHDAFLM (310 aa). The Nucleophile role is filled by S154. R224 serves as a coordination point for substrate. Active-site residues include D319 and H352. D353 contacts substrate.

This sequence belongs to the AB hydrolase superfamily. MetX family. In terms of assembly, homodimer.

Its subcellular location is the cytoplasm. It carries out the reaction L-homoserine + succinyl-CoA = O-succinyl-L-homoserine + CoA. Its pathway is amino-acid biosynthesis; L-methionine biosynthesis via de novo pathway; O-succinyl-L-homoserine from L-homoserine: step 1/1. Its activity is regulated as follows. Activity increases in the presence of MetW. Transfers a succinyl group from succinyl-CoA to L-homoserine, forming succinyl-L-homoserine. This Neisseria gonorrhoeae protein is Homoserine O-succinyltransferase.